Here is a 406-residue protein sequence, read N- to C-terminus: CinA-like protein (406 aa).

Belongs to the CinA family.

The sequence is that of CinA-like protein from Deinococcus geothermalis (strain DSM 11300 / CIP 105573 / AG-3a).